Reading from the N-terminus, the 258-residue chain is DNA repair protein RecO (258 aa).

The protein belongs to the RecO family.

Involved in DNA repair and RecF pathway recombination. The chain is DNA repair protein RecO from Lactiplantibacillus plantarum (strain ATCC BAA-793 / NCIMB 8826 / WCFS1) (Lactobacillus plantarum).